A 320-amino-acid polypeptide reads, in one-letter code: Zinc transporter ZitB (320 aa).

Transmembrane regions (helical) follow at residues 16–36, 43–63, 85–105, 117–137, 153–173, and 180–200; these read LLAA…GGLL, LADA…LVAV, AAFV…WEAI, VPML…FWLL, LHVL…IIIL, and IDPI…WALL.

Belongs to the cation diffusion facilitator (CDF) transporter (TC 2.A.4) family. SLC30A subfamily.

Its subcellular location is the cell inner membrane. Functionally, involved in zinc efflux across the cytoplasmic membrane, thus reducing zinc accumulation in the cytoplasm and rendering bacteria more resistant to zinc. It may contribute to zinc homeostasis at low concentrations of zinc. This is Zinc transporter ZitB from Pectobacterium atrosepticum (strain SCRI 1043 / ATCC BAA-672) (Erwinia carotovora subsp. atroseptica).